The primary structure comprises 298 residues: Cholesterol 25-hydroxylase (298 aa).

The N-linked (GlcNAc...) asparagine glycan is linked to Asn5. A run of 3 helical transmembrane segments spans residues 38–58, 88–108, and 124–144; these read IFPV…FVVL, LGLT…LHWV, and LLSH…AWHL. One can recognise a Fatty acid hydroxylase domain in the interval 128 to 263; it reads VLICLLLFDT…FTHWDKMLGT (136 aa). A Histidine box-1 motif is present at residues 142–146; that stretch reads WHLLH. The short motif at 157–161 is the Histidine box-2 element; the sequence is HKVHH. An N-linked (GlcNAc...) asparagine glycan is attached at Asn163. A Histidine box-3 motif is present at residues 238 to 244; sequence HHDMHHS.

It belongs to the sterol desaturase family. Fe cation serves as cofactor. Post-translationally, N-glycosylated. As to expression, widely expressed at low level and at higher level in the lung. Weakly expressed in the heart, lung and kidney.

The protein localises to the endoplasmic reticulum membrane. The catalysed reaction is cholesterol + AH2 + O2 = 25-hydroxycholesterol + A + H2O. It catalyses the reaction cholesterol + NADPH + O2 + H(+) = 25-hydroxycholesterol + NADP(+) + H2O. In terms of biological role, catalyzes the formation of 25-hydroxycholesterol from cholesterol, leading to repress cholesterol biosynthetic enzymes. Plays a key role in cell positioning and movement in lymphoid tissues: 25-hydroxycholesterol is an intermediate in biosynthesis of 7-alpha,25-dihydroxycholesterol (7-alpha,25-OHC), an oxysterol that acts as a ligand for the G protein-coupled receptor GPR183/EBI2, a chemotactic receptor for a number of lymphoid cells. May play an important role in regulating lipid metabolism by synthesizing a corepressor that blocks sterol regulatory element binding protein (SREBP) processing. In testis, production of 25-hydroxycholesterol by macrophages may play a role in Leydig cell differentiation. Required to restrain inflammation in macrophages: production of 25-hydroxycholesterol protects macrophages from cholesterol overload, thereby preventing mitochondrial DNA release and subsequent activation of the AIM2 inflammasome. Interferon-stimulated gene which has broad antiviral activities against a wide range of enveloped viruses. The chain is Cholesterol 25-hydroxylase from Mus musculus (Mouse).